Reading from the N-terminus, the 91-residue chain is Translation initiation factor IF-1 (91 aa).

The region spanning 1–72 is the S1-like domain; sequence MAKEELLEFE…DRGRINFRHK (72 aa). Residues 70 to 91 form a disordered region; it reads RHKAEGNAPPPGARRQQNFRRR.

This sequence belongs to the IF-1 family. As to quaternary structure, component of the 30S ribosomal translation pre-initiation complex which assembles on the 30S ribosome in the order IF-2 and IF-3, IF-1 and N-formylmethionyl-tRNA(fMet); mRNA recruitment can occur at any time during PIC assembly.

It is found in the cytoplasm. Functionally, one of the essential components for the initiation of protein synthesis. Stabilizes the binding of IF-2 and IF-3 on the 30S subunit to which N-formylmethionyl-tRNA(fMet) subsequently binds. Helps modulate mRNA selection, yielding the 30S pre-initiation complex (PIC). Upon addition of the 50S ribosomal subunit IF-1, IF-2 and IF-3 are released leaving the mature 70S translation initiation complex. The polypeptide is Translation initiation factor IF-1 (Azorhizobium caulinodans (strain ATCC 43989 / DSM 5975 / JCM 20966 / LMG 6465 / NBRC 14845 / NCIMB 13405 / ORS 571)).